Here is a 294-residue protein sequence, read N- to C-terminus: Deubiquitinase OTUD6B (294 aa).

Met-1 is subject to N-acetylmethionine. The OTU domain occupies 148–285; sequence LEIKQIPSDG…GEHYNSVTRL (138 aa). The tract at residues 153-159 is cys-loop; sequence IPSDGHC. Asp-156 is an active-site residue. Cys-159 acts as the Nucleophile in catalysis. The interval 220 to 230 is variable-loop; the sequence is IVNTAAWGGQL. Positions 268 to 278 are his-loop; it reads YMRHAYGLGEH. The active site involves His-278.

Interacts with the eukaryotic translation initiation factor 4F complex. Ubiquitously expressed. Expression is observed in several organ systems including the cardiovascular, digestive, central and peripheral nervous and musculoskeletal systems.

The catalysed reaction is Thiol-dependent hydrolysis of ester, thioester, amide, peptide and isopeptide bonds formed by the C-terminal Gly of ubiquitin (a 76-residue protein attached to proteins as an intracellular targeting signal).. In terms of biological role, deubiquitinating enzyme that may play a role in the ubiquitin-dependent regulation of protein synthesis, downstream of mTORC1. May associate with the protein synthesis initiation complex and modify its ubiquitination to repress translation. May also repress DNA synthesis and modify different cellular targets thereby regulating cell growth and proliferation. May also play a role in proteasome assembly and function. The polypeptide is Deubiquitinase OTUD6B (Mus musculus (Mouse)).